A 418-amino-acid chain; its full sequence is AP-3 complex subunit mu-1 (418 aa).

Residues 176-417 enclose the MHD domain; that stretch reads NNEAYFDVVE…VTKAGKFQVR (242 aa).

Belongs to the adaptor complexes medium subunit family. In terms of assembly, adaptor protein complex 3 (AP-3) is a heterotetramer composed of two large adaptins (delta-type subunit AP3D1 and beta-type subunit AP3B1 or AP3B2), a medium adaptin (mu-type subunit AP3M1 or AP3M2) and a small adaptin (sigma-type subunit APS1 or AP3S2). Interacts with AGAP1. AP-3 associates with the BLOC-1 complex. As to quaternary structure, (Microbial infection) Interacts with human respiratory virus (HRSV) matrix protein; this interaction plays an essential role in trafficking the matrix protein in host cells.

Its subcellular location is the golgi apparatus. The protein localises to the cytoplasmic vesicle membrane. Functionally, part of the AP-3 complex, an adaptor-related complex which is not clathrin-associated. The complex is associated with the Golgi region as well as more peripheral structures. It facilitates the budding of vesicles from the Golgi membrane and may be directly involved in trafficking to lysosomes. In concert with the BLOC-1 complex, AP-3 is required to target cargos into vesicles assembled at cell bodies for delivery into neurites and nerve terminals. In Homo sapiens (Human), this protein is AP-3 complex subunit mu-1 (AP3M1).